The following is a 383-amino-acid chain: Inactive serine protease 54 (383 aa).

The N-terminal stretch at 1–20 (MAEMRGMLLMLLYISHSSSA) is a signal peptide. Residues 21–258 (ICGIQKATIA…YSDWITAKTR (238 aa)) form the Peptidase S1 domain. N-linked (GlcNAc...) asparagine glycosylation occurs at Asn113. Disulfide bonds link Cys154/Cys216, Cys185/Cys195, and Cys206/Cys237. The disordered stretch occupies residues 305–334 (QGQRMSTKSNKQKDAGQNFRVNRQPETSGP). A compositionally biased stretch (polar residues) spans 323–334 (FRVNRQPETSGP).

It belongs to the peptidase S1 family. Plasma kallikrein subfamily.

It is found in the secreted. In Mus musculus (Mouse), this protein is Inactive serine protease 54 (Prss54).